The following is a 324-amino-acid chain: R2-like ligand binding oxidase (324 aa).

E79, E112, and H115 together coordinate Mn(2+). Residues 82-173 (VTEDIQPFMK…VNQVRASVTY (92 aa)) constitute a cross-link (3-(O4'-tyrosyl)-valine (Val-Tyr)). E112 contributes to the Fe cation binding site. 3 residues coordinate Fe cation: E178, E213, and H216. Residues 304-324 (PEALEEKFGEEDAKAMSEAAG) form a disordered region. The segment covering 307 to 318 (LEEKFGEEDAKA) has biased composition (basic and acidic residues).

It belongs to the ribonucleoside diphosphate reductase small chain family. R2-like ligand binding oxidase subfamily. As to quaternary structure, homodimer. Requires Fe cation as cofactor. It depends on Mn(2+) as a cofactor.

In terms of biological role, probable oxidase. This is R2-like ligand binding oxidase from Rhodococcus jostii (strain RHA1).